Consider the following 796-residue polypeptide: Leucine--tRNA ligase (796 aa).

Residues 40-51 carry the 'HIGH' region motif; that stretch reads PYPSASGLHVGH. The 'KMSKS' region signature appears at 569–573; it reads KMSKS. Lysine 572 is an ATP binding site.

The protein belongs to the class-I aminoacyl-tRNA synthetase family.

The protein resides in the cytoplasm. It carries out the reaction tRNA(Leu) + L-leucine + ATP = L-leucyl-tRNA(Leu) + AMP + diphosphate. In Bdellovibrio bacteriovorus (strain ATCC 15356 / DSM 50701 / NCIMB 9529 / HD100), this protein is Leucine--tRNA ligase.